The sequence spans 549 residues: Oxygen-dependent choline dehydrogenase (549 aa).

An FAD-binding site is contributed by 4–33; sequence DYVIVGSGSAGSAIAYRLSEDGRYSVIVIE. His465 serves as the catalytic Proton acceptor. Positions 528–549 are disordered; it reads KTPLPRSNQEPWVNPRAAVSDR.

It belongs to the GMC oxidoreductase family. It depends on FAD as a cofactor.

It carries out the reaction choline + A = betaine aldehyde + AH2. The catalysed reaction is betaine aldehyde + NAD(+) + H2O = glycine betaine + NADH + 2 H(+). It functions in the pathway amine and polyamine biosynthesis; betaine biosynthesis via choline pathway; betaine aldehyde from choline (cytochrome c reductase route): step 1/1. Involved in the biosynthesis of the osmoprotectant glycine betaine. Catalyzes the oxidation of choline to betaine aldehyde and betaine aldehyde to glycine betaine at the same rate. The polypeptide is Oxygen-dependent choline dehydrogenase (Agrobacterium fabrum (strain C58 / ATCC 33970) (Agrobacterium tumefaciens (strain C58))).